The following is an 806-amino-acid chain: U4/U6.U5 tri-snRNP-associated protein 1 (806 aa).

Positions 1-121 (MGSSKKHRGE…SGDASSLSIE (121 aa)) are disordered. The span at 32 to 42 (HREHKKHKHRS) shows a compositional bias: basic residues. Over residues 58–101 (ERGSERGSGRRGAEAEARSGAHGRERSQAEPSERRVKREKRDDG) the composition is skewed to basic and acidic residues. The span at 104–119 (AAASSKASSGDASSLS) shows a compositional bias: low complexity. Residues Lys125 and Lys133 each participate in a glycyl lysine isopeptide (Lys-Gly) (interchain with G-Cter in SUMO2) cross-link. Lys141 is covalently cross-linked (Glycyl lysine isopeptide (Lys-Gly) (interchain with G-Cter in SUMO1); alternate). A Glycyl lysine isopeptide (Lys-Gly) (interchain with G-Cter in SUMO2); alternate cross-link involves residue Lys141. Residues Lys147 and Lys188 each participate in a glycyl lysine isopeptide (Lys-Gly) (interchain with G-Cter in SUMO2) cross-link. Positions 157-231 (NPMALRQREE…KLLEEMDQEF (75 aa)) form a coiled coil. Thr189 carries the phosphothreonine modification. A Glycyl lysine isopeptide (Lys-Gly) (interchain with G-Cter in SUMO2) cross-link involves residue Lys277. Ser321 carries the post-translational modification Phosphoserine. Residues Lys329 and Lys336 each participate in a glycyl lysine isopeptide (Lys-Gly) (interchain with G-Cter in SUMO2) cross-link. A Phosphoserine modification is found at Ser348. Glycyl lysine isopeptide (Lys-Gly) (interchain with G-Cter in SUMO2) cross-links involve residues Lys400 and Lys414. The disordered stretch occupies residues 418-504 (MRADDLLPLG…GLEEDEAELE (87 aa)). Thr430 bears the Phosphothreonine mark. Residues 450-460 (VEEEALEDEEK) show a composition bias toward acidic residues. A phosphoserine mark is found at Ser480, Ser492, and Ser527. Positions 494–540 (EGLEEDEAELELQKQLEKGRRLRQLQQLQQLRDSGEKVLEIVKKLES) form a coiled coil. Lys554 is covalently cross-linked (Glycyl lysine isopeptide (Lys-Gly) (interchain with G-Cter in SUMO2)). The disordered stretch occupies residues 578 to 610 (AGNREEQEELMDFERDEERSANGGSESDGEENI). Ser597, Ser602, Ser604, and Ser627 each carry phosphoserine. Residues Lys654, Lys663, and Lys690 each participate in a glycyl lysine isopeptide (Lys-Gly) (interchain with G-Cter in SUMO2) cross-link. Thr701 carries the phosphothreonine modification. Glycyl lysine isopeptide (Lys-Gly) (interchain with G-Cter in SUMO2) cross-links involve residues Lys705, Lys715, Lys729, Lys755, and Lys764. At Ser767 the chain carries Phosphoserine. Thr770 is modified (phosphothreonine). Glycyl lysine isopeptide (Lys-Gly) (interchain with G-Cter in SUMO2) cross-links involve residues Lys781 and Lys786. A Phosphoserine modification is found at Ser795. Lys797 participates in a covalent cross-link: Glycyl lysine isopeptide (Lys-Gly) (interchain with G-Cter in SUMO2).

The protein belongs to the SNU66/SART1 family. In terms of assembly, identified in the spliceosome C complex. Component of the U4/U6-U5 tri-snRNP complex composed of the U4, U6 and U5 snRNAs and at least PRPF3, PRPF4, PRPF6, PRPF8, PRPF31, SNRNP200, TXNL4A, SNRNP40, DDX23, CD2BP2, PPIH, SNU13, EFTUD2, SART1 and USP39. Interacts with UBL5. Interacts with IVNS1ABP (via Kelch repeats). Sumoylated with SUMO2. Ubiquitously expressed. Shows a high expression in fetal liver and a low expression in adult liver.

The protein resides in the nucleus. Its function is as follows. Plays a role in mRNA splicing as a component of the U4/U6-U5 tri-snRNP, one of the building blocks of the spliceosome. May also bind to DNA. This is U4/U6.U5 tri-snRNP-associated protein 1 (Sart1) from Mus musculus (Mouse).